Reading from the N-terminus, the 608-residue chain is Threonine--tRNA ligase (608 aa).

Residues 1-145 (MKTLLIHAKH…TIKPGRRVRP (145 aa)) form an editing domain region. 2 catalytic regions span residues 192 to 489 (PKYL…PSLP) and 193 to 489 (KYLE…PSLP). 3 residues coordinate Zn(2+): cysteine 286, histidine 337, and histidine 458.

This sequence belongs to the class-II aminoacyl-tRNA synthetase family. Homodimer. Zn(2+) is required as a cofactor.

Its subcellular location is the cytoplasm. The enzyme catalyses tRNA(Thr) + L-threonine + ATP = L-threonyl-tRNA(Thr) + AMP + diphosphate + H(+). Catalyzes the attachment of threonine to tRNA(Thr) in a two-step reaction: L-threonine is first activated by ATP to form Thr-AMP and then transferred to the acceptor end of tRNA(Thr). Also edits incorrectly charged L-seryl-tRNA(Thr). This chain is Threonine--tRNA ligase, found in Thermofilum pendens (strain DSM 2475 / Hrk 5).